We begin with the raw amino-acid sequence, 123 residues long: Large ribosomal subunit protein uL14 (123 aa).

Belongs to the universal ribosomal protein uL14 family. As to quaternary structure, part of the 50S ribosomal subunit. Forms a cluster with proteins L3 and L19. In the 70S ribosome, L14 and L19 interact and together make contacts with the 16S rRNA in bridges B5 and B8.

Binds to 23S rRNA. Forms part of two intersubunit bridges in the 70S ribosome. The polypeptide is Large ribosomal subunit protein uL14 (Histophilus somni (strain 129Pt) (Haemophilus somnus)).